The primary structure comprises 81 residues: MSHSVKIYDTCIGCTQCVRACPLDVLEMVPWDGCKAGQIAASPRTEDCVGCKRCETACPTDFLSIRVYLGAETTRSMGLAY.

2 4Fe-4S ferredoxin-type domains span residues 2–31 and 39–68; these read SHSVKIYDTCIGCTQCVRACPLDVLEMVPW and IAASPRTEDCVGCKRCETACPTDFLSIRVY. [4Fe-4S] cluster contacts are provided by Cys11, Cys14, Cys17, Cys21, Cys48, Cys51, Cys54, and Cys58.

In terms of assembly, the cyanobacterial PSI reaction center is composed of one copy each of PsaA,B,C,D,E,F,I,J,K,L,M and X, and forms trimeric complexes. [4Fe-4S] cluster serves as cofactor.

It is found in the cellular thylakoid membrane. It catalyses the reaction reduced [plastocyanin] + hnu + oxidized [2Fe-2S]-[ferredoxin] = oxidized [plastocyanin] + reduced [2Fe-2S]-[ferredoxin]. Its function is as follows. Apoprotein for the two 4Fe-4S centers FA and FB of photosystem I (PSI); essential for photochemical activity. FB is the terminal electron acceptor of PSI, donating electrons to ferredoxin. The C-terminus interacts with PsaA/B/D and helps assemble the protein into the PSI complex. Required for binding of PsaD and PsaE to PSI. PSI is a plastocyanin/cytochrome c6-ferredoxin oxidoreductase, converting photonic excitation into a charge separation, which transfers an electron from the donor P700 chlorophyll pair to the spectroscopically characterized acceptors A0, A1, FX, FA and FB in turn. The sequence is that of Photosystem I iron-sulfur center from Synechococcus elongatus (strain ATCC 33912 / PCC 7942 / FACHB-805) (Anacystis nidulans R2).